The chain runs to 248 residues: Ribosomal RNA small subunit methyltransferase G (248 aa).

Residues G85, F90, 108–110 (DSS), 137–138 (AE), and R156 contribute to the S-adenosyl-L-methionine site.

This sequence belongs to the methyltransferase superfamily. RNA methyltransferase RsmG family.

It is found in the cytoplasm. Specifically methylates the N7 position of a guanine in 16S rRNA. The polypeptide is Ribosomal RNA small subunit methyltransferase G (Prochlorococcus marinus (strain NATL1A)).